The primary structure comprises 429 residues: Endoglucanase A (429 aa).

The first 34 residues, 1–34, serve as a signal peptide directing secretion; that stretch reads MVSKKQKFLTVILVIVLAIVIVGGVFGISFVKGR. The span at 46 to 94 shows a compositional bias: basic and acidic residues; it reads AKTEQVKEPAKEEPKLVIKEKKQDESAKKEQELKKAKEEAEAAVEKETE. Residues 46–100 form a disordered region; the sequence is AKTEQVKEPAKEEPKLVIKEKKQDESAKKEQELKKAKEEAEAAVEKETEKTEEEP. The active-site Proton donor is the E249. The active-site Nucleophile is the E334.

This sequence belongs to the glycosyl hydrolase 5 (cellulase A) family.

It catalyses the reaction Endohydrolysis of (1-&gt;4)-beta-D-glucosidic linkages in cellulose, lichenin and cereal beta-D-glucans.. This chain is Endoglucanase A (celA), found in Butyrivibrio fibrisolvens.